Reading from the N-terminus, the 1442-residue chain is DNA polymerase III PolC-type (1442 aa).

An Exonuclease domain is found at 426–582 (YVVFDVETTG…YDTEATAYIF (157 aa)).

Belongs to the DNA polymerase type-C family. PolC subfamily.

It localises to the cytoplasm. It catalyses the reaction DNA(n) + a 2'-deoxyribonucleoside 5'-triphosphate = DNA(n+1) + diphosphate. Its function is as follows. Required for replicative DNA synthesis. This DNA polymerase also exhibits 3' to 5' exonuclease activity. This chain is DNA polymerase III PolC-type, found in Staphylococcus epidermidis (strain ATCC 12228 / FDA PCI 1200).